Consider the following 511-residue polypeptide: MAAVGPRTGPGTGAEALALAAELQGEATCSICLELFREPVSVECGHSFCRACIGRCWERPGAGSVGAATRAPPFPLPCPQCREPARPSQLRPNRQLAAVATLLRRFSLPAAAPGEHGSQAAAARAAAARCGQHGEPFKLYCQDDGRAICVVCDRAREHREHAVLPLDEAVQEAKELLESRLRVLKKELEDCEVFRSTEKKESKELLKQMAAEQEKVGAEFQALRAFLVEQEGRLLGRLEELSREVAQKQNENLAQLGVEITQLSKLSSQIQETAQKPDLDFLQEFKSTLSRCSNVPGPKPTTVSSEMKNKVWNVSLKTFVLKGMLKKFKEDLRGELEKEEKVELTLDPDTANPRLILSLDLKGVRLGERAQDLPNHPCRFDTNTRVLASCGFSSGRHHWEVEVGSKDGWAFGVARESVRRKGLTPFTPEEGVWALQLNGGQYWAVTSPERSPLSCGHLSRVRVALDLEVGAVSFYAVEDMRHLYTFRVNFQERVFPLFSVCSTGTYLRIWP.

The RING-type zinc-finger motif lies at 29–82 (CSICLELFREPVSVECGHSFCRACIGRCWERPGAGSVGAATRAPPFPLPCPQCR). Position 107 is a phosphoserine; by RPS6KA5 (serine 107). The B box-type zinc-finger motif lies at 125-166 (AAAARCGQHGEPFKLYCQDDGRAICVVCDRAREHREHAVLPL). Positions 130, 133, 152, and 158 each coordinate Zn(2+). The stretch at 166–263 (LDEAVQEAKE…AQLGVEITQL (98 aa)) forms a coiled coil. A B30.2/SPRY domain is found at 324-511 (MLKKFKEDLR…STGTYLRIWP (188 aa)).

It belongs to the TRIM/RBCC family. In terms of assembly, forms homodimers. Interacts with GNIP2. Interacts with GYG1. Interacts with RNF187 (via C-terminus). Post-translationally, phosphorylated at Ser-107 by RPS6KA5/MSK1, which stimulates the ubiquitin ligase activity. Auto-ubiquitinates via 'Lys-63'-linked polyubiquitination. In terms of tissue distribution, skeletal muscle and placenta, at lower levels in heart, brain and pancreas. Isoform 1 is widely expressed with high level in testis, kidney and heart.

The protein localises to the nucleus. It is found in the cytoplasm. Its subcellular location is the golgi apparatus. It catalyses the reaction S-ubiquitinyl-[E2 ubiquitin-conjugating enzyme]-L-cysteine + [acceptor protein]-L-lysine = [E2 ubiquitin-conjugating enzyme]-L-cysteine + N(6)-ubiquitinyl-[acceptor protein]-L-lysine.. It participates in protein modification; protein ubiquitination. Its function is as follows. E3 ubiquitin-protein ligase that have both tumor-promoting and tumor-suppressing activities and functions in several biological processes including innate immunity, regulation of ferroptosis as well as cell proliferation and migration. Acts as an antiviral effector against multiple viruses by targeting specific viral proteins for ubiquitination and degradation including norovirus NTPase protein or SARS-CoV-2 NSP5 and NSP8 proteins. Mechanistically, recognizes the C-terminal glutamine-containing motif usually generated by viral proteases that process the polyproteins and trigger their ubiquitination and subsequent degradation. Mediates 'Lys-63'-linked polyubiquitination and stabilization of the JUN coactivator RNF187 in response to growth factor signaling via the MEK/ERK pathway, thereby regulating JUN transactivation and cellular proliferation. Promotes the TLR4-mediated signaling activation through its E3 ligase domain leading to production of pro-inflammatory cytokines and type I interferon. Also plays a negative role in the regulation of exogenous cytosolic DNA virus-triggered immune response. Mechanistically, enhances the 'Lys-48'-linked ubiquitination of STING1 leading to its proteasome-dependent degradation. Mediates the ubiquitination of the SIN3-HDAC chromatin remodeling complex component BRMS1. Modulates NCOA4-mediated ferritinophagy and ferroptosis in glioblastoma cells by ubiquitinating NCOA4, leading to its degradation. Functionally, (Microbial infection) Promotes Zika virus replication by mediating envelope protein E ubiquitination. This chain is E3 ubiquitin-protein ligase TRIM7 (TRIM7), found in Homo sapiens (Human).